The primary structure comprises 2248 residues: Putative Polycomb group protein ASXL3 (2248 aa).

Residues 10-84 (RTWAEAARLA…KSGLYALKKE (75 aa)) form the HTH HARE-type domain. Residues 156-232 (ALKQALRQQQ…GKQTSQHLKR (77 aa)) form a disordered region. Over residues 203–216 (KNGEADSSDKEMKH) the composition is skewed to basic and acidic residues. A compositionally biased stretch (polar residues) spans 219–228 (KSPTGKQTSQ). Residues 254–363 (PGSILVNTNL…FERFYGEKLG (110 aa)) enclose the DEUBAD domain. 11 disordered regions span residues 368–414 (ESVK…PASP), 547–583 (TSSMTHVSDTEHKESETAVETSTPKIKTGSSSLEGQF), 607–643 (CISETSFSSESPEGACTSLPSPGGETQSTSEESCTPA), 703–726 (EASPVSNLPLTSETSPMSDLPLTS), 762–853 (ERMA…ASIP), 869–1052 (LQRT…TGAR), 1123–1152 (TSKETRLPPPLSSKEGPPNLEVSSTPETKM), 1183–1203 (QQSLNPSKLPETATDLSVHSS), 1431–1462 (KLSAESLDKNSGPRNRADNSGKPQQPPGGFAP), 1573–1596 (TAPSHNFAEQARGPAPFKSEADTT), and 1990–2068 (LSPN…KRLS). 5 stretches are compositionally biased toward polar residues: residues 371–389 (KLTTGPNNAGAQSSSSCGT), 395–407 (SAQTALAEQQPKS), 564–580 (AVETSTPKIKTGSSSLE), 607–617 (CISETSFSSES), and 624–643 (SLPSPGGETQSTSEESCTPA). The span at 796–818 (NLTSQQKNLSNTPEPIIMSSSSI) shows a compositional bias: polar residues. Residues 937–949 (SHTSKSSEPSKSP) are compositionally biased toward low complexity. 3 stretches are compositionally biased toward basic and acidic residues: residues 950 to 968 (DGIRNESRDSEISKRKTAE), 975 to 987 (CKEKRARIEDDQS), and 997 to 1008 (PEKEQPPREEPR). The span at 1036-1046 (RASTSTSVSGG) shows a compositional bias: polar residues. The span at 2016-2046 (HPPPPPPPPPPPPLALPPPPPPPPPLPPPLP) shows a compositional bias: pro residues. The PHD-type; atypical zinc-finger motif lies at 2210–2247 (ELKCSCRLKAMIVCKGCGAFCHDDCIGPSKLCVACLVV).

It belongs to the Asx family. In terms of assembly, core component of the polycomb repressive deubiquitinase (PR-DUB) complex, at least composed of BAP1, one of ASXL1, ASXL2 or (probably) ASXL3, and one of MBD5 or MBD6. Distinct combinations of ASXL and MBD proteins may preferentially bind specific histone modification marks. The PR-DUB core associates with a number of accessory proteins, including FOXK1, FOXK2, KDM1B, HCFC1 and OGT; KDM1B specifically associates with ASXL2 PR-DUB complexes. Interacts (via PHD domain) with MBD5 and MBD6 (via MBD domain); the interaction is probably direct and mediates association of MBD proteins with the PR-DUB core. In terms of tissue distribution, expressed in pancreatic islets, testis, neuroblastoma, head and neck tumor.

It is found in the nucleus. In terms of biological role, putative Polycomb group (PcG) protein. PcG proteins act by forming multiprotein complexes, which are required to maintain the transcriptionally repressive state of homeotic genes throughout development. PcG proteins are not required to initiate repression, but to maintain it during later stages of development. They probably act via methylation of histones, rendering chromatin heritably changed in its expressibility. Non-catalytic component of the PR-DUB complex, a complex that specifically mediates deubiquitination of histone H2A monoubiquitinated at 'Lys-119' (H2AK119ub1). The PR-DUB complex is an epigenetic regulator of gene expression and acts as a transcriptional coactivator, affecting genes involved in development, cell communication, signaling, cell proliferation and cell viability. ASXL1, ASXL2 and ASXL3 function redundantly in the PR-DUB complex and are essential for chromatin recruitment and transcriptional activation of associated genes. The chain is Putative Polycomb group protein ASXL3 (ASXL3) from Homo sapiens (Human).